Consider the following 382-residue polypeptide: Anhydro-N-acetylmuramic acid kinase (382 aa).

ATP is bound at residue 15–22; that stretch reads GTSLDGVD.

This sequence belongs to the anhydro-N-acetylmuramic acid kinase family.

It carries out the reaction 1,6-anhydro-N-acetyl-beta-muramate + ATP + H2O = N-acetyl-D-muramate 6-phosphate + ADP + H(+). Its pathway is amino-sugar metabolism; 1,6-anhydro-N-acetylmuramate degradation. The protein operates within cell wall biogenesis; peptidoglycan recycling. Its function is as follows. Catalyzes the specific phosphorylation of 1,6-anhydro-N-acetylmuramic acid (anhMurNAc) with the simultaneous cleavage of the 1,6-anhydro ring, generating MurNAc-6-P. Is required for the utilization of anhMurNAc either imported from the medium or derived from its own cell wall murein, and thus plays a role in cell wall recycling. The protein is Anhydro-N-acetylmuramic acid kinase of Haemophilus influenzae (strain ATCC 51907 / DSM 11121 / KW20 / Rd).